Consider the following 226-residue polypeptide: PKHD-type hydroxylase Bind_0236 (226 aa).

In terms of domain architecture, Fe2OG dioxygenase spans T78 to S178. Fe cation-binding residues include H96, D98, and H159. Residue R169 coordinates 2-oxoglutarate.

The cofactor is Fe(2+). L-ascorbate serves as cofactor.

The protein is PKHD-type hydroxylase Bind_0236 of Beijerinckia indica subsp. indica (strain ATCC 9039 / DSM 1715 / NCIMB 8712).